Here is a 338-residue protein sequence, read N- to C-terminus: Aspartate-semialdehyde dehydrogenase (338 aa).

Residues 13–16 and 41–42 contribute to the NADP(+) site; these read TGNV and NS. Arginine 101 serves as a coordination point for phosphate. Cysteine 132 functions as the Acyl-thioester intermediate in the catalytic mechanism. Glutamine 159 contributes to the substrate binding site. Position 162–163 (162–163) interacts with NADP(+); it reads SG. Lysine 216 serves as a coordination point for phosphate. Residue arginine 237 participates in substrate binding. Histidine 244 (proton acceptor) is an active-site residue. Asparagine 317 serves as a coordination point for NADP(+).

This sequence belongs to the aspartate-semialdehyde dehydrogenase family. Homodimer.

The catalysed reaction is L-aspartate 4-semialdehyde + phosphate + NADP(+) = 4-phospho-L-aspartate + NADPH + H(+). It participates in amino-acid biosynthesis; L-lysine biosynthesis via DAP pathway; (S)-tetrahydrodipicolinate from L-aspartate: step 2/4. The protein operates within amino-acid biosynthesis; L-methionine biosynthesis via de novo pathway; L-homoserine from L-aspartate: step 2/3. Its pathway is amino-acid biosynthesis; L-threonine biosynthesis; L-threonine from L-aspartate: step 2/5. In terms of biological role, catalyzes the NADPH-dependent formation of L-aspartate-semialdehyde (L-ASA) by the reductive dephosphorylation of L-aspartyl-4-phosphate. The protein is Aspartate-semialdehyde dehydrogenase of Rickettsia bellii (strain RML369-C).